A 491-amino-acid chain; its full sequence is G2/mitotic-specific cyclin-A (491 aa).

The tract at residues 1–21 (MASFQIHQDMSNKENPGIKIP) is disordered. The Cyclin N-terminal domain occupies 206–332 (DILEYFRESE…ILKILSFDLC (127 aa)).

The protein belongs to the cyclin family. Cyclin AB subfamily. Component of the Frs-CycA-Cdk1 complex composed of CycA, Cdk1 and Z600. Interacts (via C-terminus) with Z600. Interacts with otu and (via C-terminus) with bam; the interaction stabilizes CycA by negatively regulating its ubiquitination. Post-translationally, ubiquitinated. Ubiquitination state is negatively regulated by a deubiquitinase complex made up of bam and otu.

Its function is as follows. Essential for the control of the cell cycle at the G2/M (mitosis) transition. Interacts with the Cdk1 and Cdk2 protein kinases to form MPF. G2/M cyclins accumulate steadily during G2 and are abruptly destroyed at mitosis. This is G2/mitotic-specific cyclin-A (CycA) from Drosophila melanogaster (Fruit fly).